We begin with the raw amino-acid sequence, 340 residues long: Fructoselysine 6-phosphate deglycase (340 aa).

SIS domains are found at residues 35-169 (IVEE…RLAP) and 201-331 (LGEL…PDER).

As to quaternary structure, homododecamer.

It carries out the reaction N(6)-(6-phospho-D-fructosyl)-L-lysine + H2O = D-glucose 6-phosphate + L-lysine. The protein operates within carbohydrate metabolism; fructoselysine degradation; D-glucose 6-phosphate and lysine from fructoselysine: step 2/2. In terms of biological role, catalyzes the reversible conversion of fructoselysine 6-phosphate to glucose 6-phosphate and lysine. Functions in a fructoselysine degradation pathway that allows E.coli to grow on fructoselysine or psicoselysine. The polypeptide is Fructoselysine 6-phosphate deglycase (frlB) (Escherichia coli O157:H7).